A 435-amino-acid polypeptide reads, in one-letter code: Membrane-bound ghrelin O-acyltransferase MBOAT4 (435 aa).

The Lumenal segment spans residues 1–5 (MDWLQ). The chain crosses the membrane as a helical span at residues 6–26 (LFFLHPLSFYQGAAFPFALLF). The Cytoplasmic portion of the chain corresponds to 27–40 (NYLCILDTFSTRAR). The chain crosses the membrane as a helical span at residues 41–56 (YLFLLAGGGVLAFAAM). At 57–59 (GPY) the chain is on the lumenal side. Residues 60–76 (SLLIFIPALCAVALVSF) form a helical membrane-spanning segment. Residues 77 to 82 (LSPQEV) lie on the Cytoplasmic side of the membrane. A helical membrane pass occupies residues 83–101 (HRLTFFFQMGWQTLCHLGL). Residues 102–120 (HYTEYYLGEPPPVRFYITL) lie on the Lumenal side of the membrane. A helical transmembrane segment spans residues 121 to 136 (SSLMLLTQRVTSLSLD). Residues 137-206 (ICEGKVEAPR…YPSISFRALT (70 aa)) lie on the Cytoplasmic side of the membrane. A helical membrane pass occupies residues 207–227 (WRGLQILGLECLKVALRSAVS). The Lumenal portion of the chain corresponds to 228–240 (AGAGLDDCQRLEC). Residues 241-261 (IYLMWSTAWLFKLTYYSHWIL) form a helical membrane-spanning segment. At 262-324 (DDSLLHAAGF…RRLVFRKSRR (63 aa)) the chain is on the cytoplasmic side. Active-site residues include asparagine 307 and histidine 338. The helical transmembrane segment at 325–338 (WPLLQTFAFSAWWH) threads the bilayer. Over 339–340 (GL) the chain is Lumenal. The chain crosses the membrane as a helical span at residues 341 to 357 (HPGQVFGFLCWSVMVKA). Residues 358–376 (DYLIHTFANVCIRSWPLRL) lie on the Cytoplasmic side of the membrane. Residues 377 to 397 (LYRALTWAHTQLIIAYIMLAV) traverse the membrane as a helical segment. The Lumenal portion of the chain corresponds to 398–407 (EGRSLSSLCQ). A helical transmembrane segment spans residues 408–428 (LCCSYNSLFPVMYGLLLFLLA). Over 429 to 435 (ERKDKRN) the chain is Cytoplasmic.

The protein belongs to the membrane-bound acyltransferase family. As to quaternary structure, monomer. In terms of processing, not glycosylated. In terms of tissue distribution, highly expressed in stomach and pancreas. Lower expression in small intestine and colon. Very low expression in testis.

It is found in the endoplasmic reticulum membrane. It catalyses the reaction octanoyl-CoA + L-seryl-[protein] = O-octanoyl-L-seryl-[protein] + CoA. The enzyme catalyses hexanoyl-CoA + L-seryl-[protein] = O-hexanoyl-L-seryl-[protein] + CoA. It carries out the reaction decanoyl-CoA + L-seryl-[protein] = O-decanoyl-L-seryl-[protein] + CoA. The catalysed reaction is L-seryl-[protein] + acetyl-CoA = O-acetyl-L-seryl-[protein] + CoA. It catalyses the reaction L-seryl-[protein] + butanoyl-CoA = O-butanoyl-L-seryl-[protein] + CoA. The enzyme catalyses pentanoyl-CoA + L-seryl-[protein] = O-pentanoyl-L-seryl-[protein] + CoA. It carries out the reaction heptanoyl-CoA + L-seryl-[protein] = O-heptanoyl-L-seryl-[protein] + CoA. The catalysed reaction is nonanoyl-CoA + L-seryl-[protein] = O-nonanoyl-L-seryl-[protein] + CoA. It catalyses the reaction L-seryl-[protein] + dodecanoyl-CoA = O-dodecanoyl-L-seryl-[protein] + CoA. The enzyme catalyses L-seryl-[protein] + tetradecanoyl-CoA = O-tetradecanoyl-L-seryl-[protein] + CoA. It carries out the reaction a fatty acyl-CoA + L-seryl-[protein] = O-fatty acyl-L-seryl-[protein] + CoA. Its activity is regulated as follows. Inhibited by 1-[2-cyano-3,12-dioxooleana-1,9(11)- dien-28-oyl]ethylamide (CDDO-EA) with an IC(50) of 60 uM. Inhibited by Fe3+ and Cu2+ and the O-acyltransferase activity is completely blocked over 5 mM Fe3+ and 0.5 mM Cu2+. In terms of biological role, catalyzes ghrelin acylation at 'Ser-3' using preferentially octanoyl-CoA, hexanoyl-CoA and decanoyl-CoA as acyl-CoA donors leading to ghrelin activity. In vitro also uses acyl-CoA donors of different lengths from short-chain (C2) to long-chain fatty acids (C16) knowing that acyl-CoA donors from butanoyl-CoA (C4) to dodecanoyl-CoA (C12) are more efficient compared to longer acyl-CoA donors, such as myristoyl-CoA (C14) and palmitoyl-CoA (C16) that are not efficient. Its function is as follows. Inactive octanoyltransferase activity. This is Membrane-bound ghrelin O-acyltransferase MBOAT4 from Mus musculus (Mouse).